Here is a 611-residue protein sequence, read N- to C-terminus: Alkyldihydroxyacetonephosphate synthase (611 aa).

An FAD-binding PCMH-type domain is found at 137–317; that stretch reads VKNAPDLIVL…TEAVMKVHAV (181 aa). FAD contacts are provided by residues 169–175, 237–243, 250–255, and 301–307; these read PMGGGSN, DSFEFST, TCSSGH, and EGTLGII. Position 447 (arginine 447) interacts with substrate. The active-site Proton donor/acceptor is the tyrosine 508. The interval 544–546 is important for enzyme activity; that stretch reads HHH. The short motif at 609–611 is the Microbody targeting signal element; that stretch reads PKL.

Belongs to the FAD-binding oxidoreductase/transferase type 4 family. As to quaternary structure, homodimer. FAD is required as a cofactor.

The protein resides in the peroxisome. The enzyme catalyses a long chain fatty alcohol + a 1-acylglycerone 3-phosphate = a 1-O-alkylglycerone 3-phosphate + a long-chain fatty acid + H(+). The protein operates within glycerolipid metabolism; ether lipid biosynthesis. Its function is as follows. Catalyzes the exchange of an acyl for a long-chain alkyl group and the formation of the ether bond in the biosynthesis of ether phospholipids. The sequence is that of Alkyldihydroxyacetonephosphate synthase (eapA) from Dictyostelium discoideum (Social amoeba).